The following is a 637-amino-acid chain: Extracellular metalloproteinase MEP (637 aa).

The signal sequence occupies residues 1-21 (MRSVDSLLLLGLTGLASQANA). The propeptide occupies 22-246 (HPAKRQPNDS…VVGVVDYVAD (225 aa)). N288 carries an N-linked (GlcNAc...) asparagine glycan. H431 is a binding site for Zn(2+). The active site involves E432. Zn(2+) is bound at residue H435.

It belongs to the peptidase M36 family. Zn(2+) serves as cofactor.

It is found in the secreted. Functionally, secreted metalloproteinase that probably acts as a virulence factor. Cleaves Z.mays Endochitinase A (CHIA) between residues 'Gly-29' and 'Cys-30'. In Fusarium vanettenii (strain ATCC MYA-4622 / CBS 123669 / FGSC 9596 / NRRL 45880 / 77-13-4) (Fusarium solani subsp. pisi), this protein is Extracellular metalloproteinase MEP (MEP).